We begin with the raw amino-acid sequence, 201 residues long: Ras-related protein Rab-1C (201 aa).

The interval 1-20 (MGCSPSKEGNGSFSSTSTSF) is disordered. Gly-2 carries the N-myristoyl glycine lipid modification. Cys-3 carries S-palmitoyl cysteine lipidation. Residues 40 to 48 (GDSGVGKSC), 58 to 65 (FTDSYIST), 88 to 92 (DTAGQ), 146 to 149 (NKCD), and 176 to 178 (SAK) contribute to the GTP site. The Effector region signature appears at 62–70 (YISTIGVDF).

It belongs to the small GTPase superfamily. Rab family. Although this sequence lacks the C-terminal cysteine motifs subject to isoprenylation in other Rab proteins, it does have N-terminal myristoylation and S-palmitoylation sequence motifs.

This chain is Ras-related protein Rab-1C (Rab1C), found in Dictyostelium discoideum (Social amoeba).